Consider the following 296-residue polypeptide: Protoheme IX farnesyltransferase (296 aa).

At 1-9 the chain is on the cytoplasmic side; it reads MMFKQYLQV. The chain crosses the membrane as a helical span at residues 10 to 28; that stretch reads TKPGIIFGNLISVIGGFLL. Residues 29–37 are Periplasmic-facing; the sequence is ASKGSIDYP. Residues 38–56 traverse the membrane as a helical segment; it reads LFIYTLVGVSLVVASGCVF. The Cytoplasmic segment spans residues 57 to 78; sequence NNFIDRDIDRKMERTKNRVLVK. The chain crosses the membrane as a helical span at residues 79 to 97; the sequence is GLISPGVSLVYATLLGIAG. Over 98-107 the chain is Periplasmic; sequence FMLLWFGANP. The helical transmembrane segment at 108-126 threads the bilayer; it reads LACWLGVMGFVVYVGIYSL. Topologically, residues 127 to 197 are cytoplasmic; it reads YMKRHSVYGT…YQAANIPVLP (71 aa). A helical transmembrane segment spans residues 198 to 216; the sequence is VVKGISVAKNHITLYIIAF. Topologically, residues 217–228 are periplasmic; that stretch reads AVATLMLTLGGY. A helical transmembrane segment spans residues 229 to 247; the sequence is AGYKYLVVAAAVSVWWLGM. Residues 248–268 lie on the Cytoplasmic side of the membrane; the sequence is ALRGYKVEDDKVWARKLFGFS. Residues 269 to 287 traverse the membrane as a helical segment; it reads IIAITALSIMMSVDFMVPN. The Periplasmic segment spans residues 288 to 296; the sequence is SQSLLTYVW.

Belongs to the UbiA prenyltransferase family. Protoheme IX farnesyltransferase subfamily.

The protein localises to the cell inner membrane. The catalysed reaction is heme b + (2E,6E)-farnesyl diphosphate + H2O = Fe(II)-heme o + diphosphate. The protein operates within porphyrin-containing compound metabolism; heme O biosynthesis; heme O from protoheme: step 1/1. Functionally, converts heme B (protoheme IX) to heme O by substitution of the vinyl group on carbon 2 of heme B porphyrin ring with a hydroxyethyl farnesyl side group. The polypeptide is Protoheme IX farnesyltransferase (Salmonella arizonae (strain ATCC BAA-731 / CDC346-86 / RSK2980)).